Here is a 75-residue protein sequence, read N- to C-terminus: Conotoxin TsMEKL-011 (75 aa).

The first 19 residues, 1–19 (MEKLTILLLVAAVLMSTQA), serve as a signal peptide directing secretion. The propeptide occupies 20–45 (LIQRGGAKRRKVNFFSIREPGAEDWR). 3 disulfides stabilise this stretch: Cys-49/Cys-63, Cys-56/Cys-67, and Cys-62/Cys-71.

Belongs to the conotoxin O2 superfamily. In terms of tissue distribution, expressed by the venom duct.

It localises to the secreted. This chain is Conotoxin TsMEKL-011, found in Conus tessulatus (Tessellate cone).